The primary structure comprises 523 residues: Acetyl-coenzyme A carboxylase carboxyl transferase subunit beta, chloroplastic (523 aa).

In terms of domain architecture, CoA carboxyltransferase N-terminal spans 224-523; it reads FWVICENCHK…FVPSNQNSIK (300 aa). Positions 228, 231, 247, and 250 each coordinate Zn(2+). The segment at 228-250 adopts a C4-type zinc-finger fold; it reads CENCHKFNYKRLFKSKMNICEEC.

The protein belongs to the AccD/PCCB family. As to quaternary structure, acetyl-CoA carboxylase is a heterohexamer composed of biotin carboxyl carrier protein, biotin carboxylase and 2 subunits each of ACCase subunit alpha and ACCase plastid-coded subunit beta (accD). It depends on Zn(2+) as a cofactor.

The protein localises to the plastid. It is found in the chloroplast stroma. The enzyme catalyses N(6)-carboxybiotinyl-L-lysyl-[protein] + acetyl-CoA = N(6)-biotinyl-L-lysyl-[protein] + malonyl-CoA. It participates in lipid metabolism; malonyl-CoA biosynthesis; malonyl-CoA from acetyl-CoA: step 1/1. In terms of biological role, component of the acetyl coenzyme A carboxylase (ACC) complex. Biotin carboxylase (BC) catalyzes the carboxylation of biotin on its carrier protein (BCCP) and then the CO(2) group is transferred by the transcarboxylase to acetyl-CoA to form malonyl-CoA. The chain is Acetyl-coenzyme A carboxylase carboxyl transferase subunit beta, chloroplastic from Cucumis sativus (Cucumber).